Reading from the N-terminus, the 215-residue chain is Ribose-5-phosphate isomerase A (215 aa).

Residues 26–29 (TGST), 79–82 (DGAD), and 92–95 (KGGG) each bind substrate. The active-site Proton acceptor is the E101. K119 contacts substrate.

Belongs to the ribose 5-phosphate isomerase family. As to quaternary structure, homodimer.

The catalysed reaction is aldehydo-D-ribose 5-phosphate = D-ribulose 5-phosphate. It participates in carbohydrate degradation; pentose phosphate pathway; D-ribose 5-phosphate from D-ribulose 5-phosphate (non-oxidative stage): step 1/1. Its function is as follows. Catalyzes the reversible conversion of ribose-5-phosphate to ribulose 5-phosphate. This is Ribose-5-phosphate isomerase A from Xanthomonas oryzae pv. oryzae (strain PXO99A).